The sequence spans 299 residues: Sulfate adenylyltransferase subunit 2 (299 aa).

A disordered region spans residues 276-299 (EREGRVIDHDSAGSMEKKKREGYF).

Belongs to the PAPS reductase family. CysD subfamily. Heterodimer composed of CysD, the smaller subunit, and CysN.

The enzyme catalyses sulfate + ATP + H(+) = adenosine 5'-phosphosulfate + diphosphate. It participates in sulfur metabolism; hydrogen sulfide biosynthesis; sulfite from sulfate: step 1/3. In terms of biological role, with CysN forms the ATP sulfurylase (ATPS) that catalyzes the adenylation of sulfate producing adenosine 5'-phosphosulfate (APS) and diphosphate, the first enzymatic step in sulfur assimilation pathway. APS synthesis involves the formation of a high-energy phosphoric-sulfuric acid anhydride bond driven by GTP hydrolysis by CysN coupled to ATP hydrolysis by CysD. The polypeptide is Sulfate adenylyltransferase subunit 2 (Pseudoalteromonas translucida (strain TAC 125)).